Reading from the N-terminus, the 373-residue chain is Probable G-protein coupled receptor 173 (373 aa).

Residues 1-26 (MANTTGEPEEVSGALSLPSASAYVKL) are Extracellular-facing. An N-linked (GlcNAc...) asparagine glycan is attached at N3. Residues 27–47 (VLLGLIMCVSLAGNAILSLLV) form a helical membrane-spanning segment. Residues 48–59 (LKERALHKAPYY) are Cytoplasmic-facing. Residues 60-80 (FLLDLCLADGIRSAICFPFVL) form a helical membrane-spanning segment. Residues 81 to 97 (ASVRHGSSWTFSALSCK) lie on the Extracellular side of the membrane. The cysteines at positions 96 and 174 are disulfide-linked. The helical transmembrane segment at 98–118 (IVAFMAVLFCFHAAFMLFCIS) threads the bilayer. Residues 119 to 139 (VTRYMAIAHHRFYAKRMTLWT) lie on the Cytoplasmic side of the membrane. Residues 140 to 160 (CAAVICMAWTLSVAMAFPPVF) form a helical membrane-spanning segment. Topologically, residues 161 to 188 (DVGTYKFIREEDQCIFEHRYFKANDTLG) are extracellular. The N-linked (GlcNAc...) asparagine glycan is linked to N184. Residues 189–209 (FMLMLAVLMAATHAVYGKLLL) traverse the membrane as a helical segment. Residues 210-287 (FEYRHRKMKP…VKGEKQLGRM (78 aa)) lie on the Cytoplasmic side of the membrane. The chain crosses the membrane as a helical span at residues 288-308 (FYAITLLFLLLWSPYIVACYW). Over 309 to 322 (RVFVKACAVPHRYL) the chain is Extracellular. A helical membrane pass occupies residues 323 to 343 (ATAVWMSFAQAAVNPIVCFLL). The Cytoplasmic segment spans residues 344–373 (NKDLKKCLRTHAPCWGTGGAPAPREPYCVM).

This sequence belongs to the G-protein coupled receptor 1 family. Expressed in the ovary, specifically in granulosa cells of follicles that have passed the primary stage and in oocytes (at protein level). Expressed in preadipocytes.

It is found in the cell membrane. Is a receptor for the SMIM20 derived peptides Phoenixin-14 and Phoenixin-20. It mediates the Phoenixin-14 and Phoenixin-20 augmentation of gonadotropin-releasing hormone (GNRH) signaling in the hypothalamus and pituitary gland. In the ovary, it mediates the effects of Phoenixin-14 and Phoenixin-20 induced granulosa cell proliferation during follicular growth. The protein is Probable G-protein coupled receptor 173 (Gpr173) of Mus musculus (Mouse).